Consider the following 452-residue polypeptide: Inner membrane metabolite transport protein YdjE (452 aa).

The Cytoplasmic segment spans residues 1-20; sequence MEQYDQIGARLDRLPLARFH. Residues 21–43 traverse the membrane as a helical segment; that stretch reads YRIFGIISFSLLLTGFLSYSGNV. Over 44–57 the chain is Periplasmic; the sequence is VLAKLVSNGWSNNF. The helical transmembrane segment at 58-80 threads the bilayer; sequence LNAAFTSALMFGYFIGSLTGGFI. At 81 to 91 the chain is on the cytoplasmic side; the sequence is GDYFGRRRAFR. The chain crosses the membrane as a helical span at residues 92-114; sequence INLLIVGIAATGAAFVPDMYWLI. The Periplasmic portion of the chain corresponds to 115 to 117; that stretch reads FFR. Residues 118-140 traverse the membrane as a helical segment; the sequence is FLMGTGMGALIMVGYASFTEFIP. Residues 141–152 are Cytoplasmic-facing; the sequence is ATVRGKWSARLS. A helical transmembrane segment spans residues 153-175; the sequence is FVGNWSPMLSAAIGVVVIAFFSW. At 176-178 the chain is on the periplasmic side; it reads RIM. Residues 179 to 198 traverse the membrane as a helical segment; it reads FLLGGIGILLAWFLSGKYFI. The Cytoplasmic segment spans residues 199 to 265; it reads ESPRWLAGKG…KGEMLRRTLV (67 aa). Residues 266-288 traverse the membrane as a helical segment; it reads AITVLIAMNISLYTITVWIPTIF. Topologically, residues 289 to 297 are periplasmic; sequence VNSGIDVDK. Residues 298-320 form a helical membrane-spanning segment; sequence SILMTAVIMIGAPVGIFIAALII. At 321 to 326 the chain is on the cytoplasmic side; sequence DHFPRR. A helical transmembrane segment spans residues 327-344; sequence LFGSTLLIIIAVLGYIYS. Topologically, residues 345-353 are periplasmic; that stretch reads IQTTEWAIL. The helical transmembrane segment at 354–376 threads the bilayer; it reads IYGLVMIFFLYMYVCFASAVYIP. Residues 377-388 are Cytoplasmic-facing; it reads ELWPTHLRLRGS. Residues 389–411 form a helical membrane-spanning segment; that stretch reads GFVNAVGRIVAVFTPYGVAALLT. The Periplasmic segment spans residues 412–415; sequence HYGS. A helical transmembrane segment spans residues 416 to 438; it reads ITVFMVLGVMLLLCALVLSIFGI. At 439–452 the chain is on the cytoplasmic side; that stretch reads ETRKVSLEEISEVN.

It belongs to the major facilitator superfamily. Sugar transporter (TC 2.A.1.1) family.

It localises to the cell inner membrane. The chain is Inner membrane metabolite transport protein YdjE (ydjE) from Escherichia coli (strain K12).